The sequence spans 190 residues: MSISRTVFGIAATAALSAALVACSPPHQQDSPVQRTNEILTTSQNPTSASSTSTSSATTTSSAPVEEDVEIVVSPAALVDGEQVTFEISGLDPEGGYYAAICDSVANPGNPVPSCTGEMADFTSQAWLSNSQPGATVEIAEDGTATVELEATATGTGLDCTTQACVAKVFGDHTEGFRDVAEVPVTFAAA.

Residues 1 to 22 (MSISRTVFGIAATAALSAALVA) form the signal peptide. A lipid anchor (N-palmitoyl cysteine) is attached at cysteine 23. Residue cysteine 23 is the site of S-diacylglycerol cysteine attachment. Residues 43–68 (SQNPTSASSTSTSSATTTSSAPVEED) are disordered. Residues 47–63 (TSASSTSTSSATTTSSA) are compositionally biased toward low complexity.

It localises to the cell membrane. Functionally, is necessary for biosynthesis of the 4-methyl-5-(beta-hydroxyethyl)thiazol component from which thiamine is formed. The chain is Thiamine biosynthesis protein X (thiX) from Corynebacterium glutamicum (strain ATCC 13032 / DSM 20300 / JCM 1318 / BCRC 11384 / CCUG 27702 / LMG 3730 / NBRC 12168 / NCIMB 10025 / NRRL B-2784 / 534).